The following is a 506-amino-acid chain: Ribose import ATP-binding protein RbsA (506 aa).

ABC transporter domains are found at residues 5–241 (LALT…VGRR) and 254–498 (RDAA…TSDV). Position 37 to 44 (37 to 44 (GENGAGKS)) interacts with ATP.

It belongs to the ABC transporter superfamily. Ribose importer (TC 3.A.1.2.1) family. The complex is composed of an ATP-binding protein (RbsA), two transmembrane proteins (RbsC) and a solute-binding protein (RbsB).

It localises to the cell inner membrane. It catalyses the reaction D-ribose(out) + ATP + H2O = D-ribose(in) + ADP + phosphate + H(+). Its function is as follows. Part of the ABC transporter complex RbsABC involved in ribose import. Responsible for energy coupling to the transport system. This chain is Ribose import ATP-binding protein RbsA, found in Burkholderia mallei (strain ATCC 23344).